The sequence spans 326 residues: tRNA-modifying protein YgfZ (326 aa).

Folate-binding residues include Trp-27 and Trp-189.

It belongs to the tRNA-modifying YgfZ family.

It localises to the cytoplasm. Folate-binding protein involved in regulating the level of ATP-DnaA and in the modification of some tRNAs. It is probably a key factor in regulatory networks that act via tRNA modification, such as initiation of chromosomal replication. The sequence is that of tRNA-modifying protein YgfZ from Escherichia coli O6:H1 (strain CFT073 / ATCC 700928 / UPEC).